A 110-amino-acid polypeptide reads, in one-letter code: Large ribosomal subunit protein uL22 (110 aa).

This sequence belongs to the universal ribosomal protein uL22 family. In terms of assembly, part of the 50S ribosomal subunit.

This protein binds specifically to 23S rRNA; its binding is stimulated by other ribosomal proteins, e.g. L4, L17, and L20. It is important during the early stages of 50S assembly. It makes multiple contacts with different domains of the 23S rRNA in the assembled 50S subunit and ribosome. Functionally, the globular domain of the protein is located near the polypeptide exit tunnel on the outside of the subunit, while an extended beta-hairpin is found that lines the wall of the exit tunnel in the center of the 70S ribosome. The sequence is that of Large ribosomal subunit protein uL22 from Acinetobacter baylyi (strain ATCC 33305 / BD413 / ADP1).